The primary structure comprises 472 residues: UDP-glycosyltransferase 2 (472 aa).

Residues serine 283, tryptophan 348–alanine 349, histidine 366–glutamate 374, and tyrosine 388–glutamine 391 each bind UDP-alpha-D-glucose.

This sequence belongs to the UDP-glycosyltransferase family. In terms of tissue distribution, highly expressed in roots. Expressed in leaves and stems.

Glycosyltransferase that possesses isoflavonoids 4'-O- and 7-O-glucosyltransferase activities. Shows a successive glucosylation toward the acceptors producing their corresponding 4',7-O-diglucosides. Can use genistein, formononetin, daidzein, liquiritigenin and naringenin as substrates. Also shows a 3'-O-glucosylation activity in vitro. This chain is UDP-glycosyltransferase 2, found in Pueraria montana var. lobata (Kudzu vine).